The sequence spans 83 residues: NAD(P)H-quinone oxidoreductase subunit L (83 aa).

Helical transmembrane passes span 17–37 (VLLAYGALGGAYLLVVPLALL) and 53–73 (TAIYGMVFLFFPGLILFAPFI).

The protein belongs to the complex I NdhL subunit family. NDH-1 can be composed of about 15 different subunits; different subcomplexes with different compositions have been identified which probably have different functions.

It localises to the cellular thylakoid membrane. The enzyme catalyses a plastoquinone + NADH + (n+1) H(+)(in) = a plastoquinol + NAD(+) + n H(+)(out). The catalysed reaction is a plastoquinone + NADPH + (n+1) H(+)(in) = a plastoquinol + NADP(+) + n H(+)(out). Its function is as follows. NDH-1 shuttles electrons from an unknown electron donor, via FMN and iron-sulfur (Fe-S) centers, to quinones in the respiratory and/or the photosynthetic chain. The immediate electron acceptor for the enzyme in this species is believed to be plastoquinone. Couples the redox reaction to proton translocation, and thus conserves the redox energy in a proton gradient. Cyanobacterial NDH-1 also plays a role in inorganic carbon-concentration. The polypeptide is NAD(P)H-quinone oxidoreductase subunit L (Synechococcus sp. (strain RCC307)).